The following is a 56-amino-acid chain: Large ribosomal subunit protein bL33 (56 aa).

It belongs to the bacterial ribosomal protein bL33 family.

The sequence is that of Large ribosomal subunit protein bL33 from Rickettsia bellii (strain OSU 85-389).